A 218-amino-acid polypeptide reads, in one-letter code: Probable GTP-binding protein EngB (218 aa).

One can recognise an EngB-type G domain in the interval 21 to 192 (NAPQIALAGR…WQELHRLAFP (172 aa)). Residues 29 to 36 (GRSNVGKS), 56 to 60 (GKTRS), 75 to 78 (DLPG), 142 to 145 (TKAD), and 171 to 173 (FSS) contribute to the GTP site. Mg(2+) contacts are provided by S36 and T58. The segment at 194–218 (MAFDTPSDGAPEPADEPEAASERAE) is disordered.

The protein belongs to the TRAFAC class TrmE-Era-EngA-EngB-Septin-like GTPase superfamily. EngB GTPase family. It depends on Mg(2+) as a cofactor.

Functionally, necessary for normal cell division and for the maintenance of normal septation. The protein is Probable GTP-binding protein EngB of Oleidesulfovibrio alaskensis (strain ATCC BAA-1058 / DSM 17464 / G20) (Desulfovibrio alaskensis).